Consider the following 610-residue polypeptide: UvrABC system protein C (610 aa).

The GIY-YIG domain occupies 16–94; that stretch reads SQPGVYRMYD…IKLYQPRYNV (79 aa). Positions 204–239 constitute a UVR domain; sequence DQVLTQLIARMEKASQDLAFEEAARIRDQIQAVRRV.

The protein belongs to the UvrC family. As to quaternary structure, interacts with UvrB in an incision complex.

It localises to the cytoplasm. Functionally, the UvrABC repair system catalyzes the recognition and processing of DNA lesions. UvrC both incises the 5' and 3' sides of the lesion. The N-terminal half is responsible for the 3' incision and the C-terminal half is responsible for the 5' incision. The protein is UvrABC system protein C of Salmonella typhimurium (strain LT2 / SGSC1412 / ATCC 700720).